We begin with the raw amino-acid sequence, 768 residues long: DNA replication licensing factor MCM3 homolog 3 (768 aa).

Positions 290-497 constitute an MCM domain; that stretch reads TFDLLGNSLA…IDRQISEHVA (208 aa). 340–347 serves as a coordination point for ATP; it reads GDPSVAKS. The Arginine finger signature appears at 472-475; that stretch reads SRFD. Residues 661–670 are compositionally biased toward basic and acidic residues; it reads EMKQQADHDA. The disordered stretch occupies residues 661–690; that stretch reads EMKQQADHDAGATGGTVDGHGSSGNDPMDV. The segment covering 672–682 has biased composition (gly residues); the sequence is ATGGTVDGHGS.

This sequence belongs to the MCM family.

It localises to the nucleus. The enzyme catalyses ATP + H2O = ADP + phosphate + H(+). Functionally, acts as a factor that allows the DNA to undergo a single round of replication per cell cycle. Required for DNA replication and cell proliferation. May act as a component of the MCM complex which is the putative replicative helicase of the replication licensing system in eukaryotic cells. The polypeptide is DNA replication licensing factor MCM3 homolog 3 (ROA3) (Zea mays (Maize)).